The primary structure comprises 668 residues: RING finger protein 214 (668 aa).

Disordered regions lie at residues 1 to 87 and 103 to 125; these read MAAS…AHEE and NGSQ…TSLR. At Ala-2 the chain carries N-acetylalanine. Phosphoserine is present on residues Ser-15, Ser-40, Ser-48, and Ser-54. Residues 43–59 show a composition bias toward polar residues; sequence KQKNLSPPSVSSQMITK. A compositionally biased stretch (basic and acidic residues) spans 60-71; it reads ESNRNAHLEHPE. Ser-196 bears the Phosphoserine mark. The stretch at 220-379 forms a coiled coil; sequence QDIEKNLDKM…AEKEAELHLT (160 aa). Positions 486-552 are disordered; that stretch reads FPILNPALSQ…SSETPRPQPV (67 aa). Ser-497, Ser-511, and Ser-516 each carry phosphoserine. The span at 523–536 shows a compositional bias: pro residues; the sequence is PHMPPAASIPPPPG. An RING-type; atypical zinc finger spans residues 623-665; that stretch reads CLMCQKLVQPSELHPMACTHALHKECIKFWAQTNTNDTCPFCP.

The polypeptide is RING finger protein 214 (Rnf214) (Mus musculus (Mouse)).